The chain runs to 115 residues: Large ribosomal subunit protein uL24 (115 aa).

The protein belongs to the universal ribosomal protein uL24 family. As to quaternary structure, part of the 50S ribosomal subunit.

One of two assembly initiator proteins, it binds directly to the 5'-end of the 23S rRNA, where it nucleates assembly of the 50S subunit. Its function is as follows. One of the proteins that surrounds the polypeptide exit tunnel on the outside of the subunit. The protein is Large ribosomal subunit protein uL24 of Acaryochloris marina (strain MBIC 11017).